A 994-amino-acid chain; its full sequence is Zinc finger protein basonuclin-1 (994 aa).

The interval 1-29 (MRRRPPSRGGRGAARARETRRQPRHRSGR) is disordered. The tract at residues 240 to 249 (MTFMLPFQFF) is hydrophobic. 2 consecutive C2H2-type zinc fingers follow at residues 357 to 380 (VFCT…NAVH) and 385 to 414 (HKCT…PRLH). Disordered regions lie at residues 402 to 425 (RNRH…RDKD) and 444 to 472 (TVTS…FPNI). Positions 533 to 539 (PKKKSRK) match the Nuclear localization signal motif. 2 positions are modified to phosphoserine: Ser-537 and Ser-541. Residues 555 to 639 (NEKRHNLSSD…HNSERETEQT (85 aa)) are disordered. Over residues 563 to 578 (SDEDMPLQVVSEDEQE) the composition is skewed to acidic residues. Residues 603–614 (PEGERPCHRESV) show a composition bias toward basic and acidic residues. Residues 615 to 630 (IESSGAISQTPEQATH) show a composition bias toward polar residues. 2 consecutive C2H2-type zinc fingers follow at residues 720–743 (FQCD…KNMH) and 748–775 (HTCT…LNLH). Residues 859 to 877 (STTSSMKSESSSHSSWDSD) are compositionally biased toward low complexity. Positions 859-881 (STTSSMKSESSSHSSWDSDGVSE) are disordered. 2 C2H2-type zinc fingers span residues 928 to 951 (ITCH…KTVH) and 956 to 983 (HKCK…PNLH). The segment at 970 to 994 (VRSRNRHSQNPNLHKSLASSPSHLQ) is disordered.

As to quaternary structure, interacts with HSF2BP (via C-terminus). Phosphorylation on Ser-537 and Ser-541 leads to cytoplasmic localization. In terms of tissue distribution, in epidermis, primarily detected in cells of the basal or immediately suprabasal layers (at protein level). In hair follicles, mainly expressed in the outer root sheath (at protein level). Expressed in epidermis, testis and foreskin, and to a lower extent in thymus, spleen, mammary glands, placenta, brain and heart. Expressed in the ovary, notably in oocytes.

Its subcellular location is the nucleus. The protein resides in the cytoplasm. It is found in the nucleoplasm. Functionally, transcriptional activator. It is likely involved in the regulation of keratinocytes terminal differentiation in squamous epithelia and hair follicles. Required for the maintenance of spermatogenesis. It is involved in the positive regulation of oocyte maturation, probably acting through the control of BMP15 levels and regulation of AKT signaling cascade. May also play a role in the early development of embryos. The polypeptide is Zinc finger protein basonuclin-1 (BNC1) (Homo sapiens (Human)).